Reading from the N-terminus, the 130-residue chain is Small ribosomal subunit protein uS11 (130 aa).

Belongs to the universal ribosomal protein uS11 family. In terms of assembly, part of the 30S ribosomal subunit. Interacts with proteins S7 and S18. Binds to IF-3.

In terms of biological role, located on the platform of the 30S subunit, it bridges several disparate RNA helices of the 16S rRNA. Forms part of the Shine-Dalgarno cleft in the 70S ribosome. This Shewanella violacea (strain JCM 10179 / CIP 106290 / LMG 19151 / DSS12) protein is Small ribosomal subunit protein uS11.